Reading from the N-terminus, the 201-residue chain is Protein S40-5 (201 aa).

Disordered stretches follow at residues 1-39 and 134-178; these read MARG…LTEE and SIHE…EGVG. Residues 17 to 29 show a composition bias toward low complexity; sequence GSSYSYGDSNGNS.

The protein belongs to the senescence regulator S40 family.

It is found in the cytoplasm. The polypeptide is Protein S40-5 (Arabidopsis thaliana (Mouse-ear cress)).